We begin with the raw amino-acid sequence, 719 residues long: Phosphoribosylformylglycinamidine synthase subunit PurL (719 aa).

His47 is a catalytic residue. Positions 50 and 89 each coordinate ATP. Glu91 is a binding site for Mg(2+). Substrate contacts are provided by residues 92–95 (SHNH) and Arg114. His93 acts as the Proton acceptor in catalysis. A Mg(2+)-binding site is contributed by Asp115. Gln238 serves as a coordination point for substrate. Asp266 lines the Mg(2+) pocket. A substrate-binding site is contributed by 310 to 312 (ESQ). The ATP site is built by Asp488 and Gly525. Asn526 provides a ligand contact to Mg(2+). Ser528 is a substrate binding site.

Belongs to the FGAMS family. In terms of assembly, monomer. Part of the FGAM synthase complex composed of 1 PurL, 1 PurQ and 2 PurS subunits.

The protein localises to the cytoplasm. It carries out the reaction N(2)-formyl-N(1)-(5-phospho-beta-D-ribosyl)glycinamide + L-glutamine + ATP + H2O = 2-formamido-N(1)-(5-O-phospho-beta-D-ribosyl)acetamidine + L-glutamate + ADP + phosphate + H(+). It participates in purine metabolism; IMP biosynthesis via de novo pathway; 5-amino-1-(5-phospho-D-ribosyl)imidazole from N(2)-formyl-N(1)-(5-phospho-D-ribosyl)glycinamide: step 1/2. Part of the phosphoribosylformylglycinamidine synthase complex involved in the purines biosynthetic pathway. Catalyzes the ATP-dependent conversion of formylglycinamide ribonucleotide (FGAR) and glutamine to yield formylglycinamidine ribonucleotide (FGAM) and glutamate. The FGAM synthase complex is composed of three subunits. PurQ produces an ammonia molecule by converting glutamine to glutamate. PurL transfers the ammonia molecule to FGAR to form FGAM in an ATP-dependent manner. PurS interacts with PurQ and PurL and is thought to assist in the transfer of the ammonia molecule from PurQ to PurL. This chain is Phosphoribosylformylglycinamidine synthase subunit PurL, found in Ruegeria pomeroyi (strain ATCC 700808 / DSM 15171 / DSS-3) (Silicibacter pomeroyi).